Reading from the N-terminus, the 384-residue chain is D-galactosamine-6-phosphate deaminase AgaS (384 aa).

SIS domains lie at 45–197 (LEPL…SQTF) and 215–364 (SEGV…PDTP).

The protein belongs to the SIS family. AgaS subfamily.

The enzyme catalyses D-galactosamine 6-phosphate + H2O = D-tagatopyranose 1-phosphate + NH4(+). Functionally, catalyzes the isomerization-deamination of galactosamine 6-phosphate to form tagatofuranose 6-phosphate and ammonium ion. The protein is D-galactosamine-6-phosphate deaminase AgaS of Escherichia coli.